An 89-amino-acid chain; its full sequence is MGDVAAKIKIMPESVDTDLGELKEKIKGVIPAGADLHGDIVEEPIAFGLKALIVTLIVNDEEGGTEPAEEAFAKVSGVENVQVVDVYRI.

It belongs to the EF-1-beta/EF-1-delta family.

Promotes the exchange of GDP for GTP in EF-1-alpha/GDP, thus allowing the regeneration of EF-1-alpha/GTP that could then be used to form the ternary complex EF-1-alpha/GTP/AAtRNA. The sequence is that of Elongation factor 1-beta from Methanosarcina barkeri (strain Fusaro / DSM 804).